Reading from the N-terminus, the 2669-residue chain is Nucleosome-remodeling factor subunit NURF301 (2669 aa).

Residues 1–12 show a composition bias toward basic residues; the sequence is MSGRGSRKRGRP. Residues 1 to 121 form a required for function in nucleosome sliding region; that stretch reads MSGRGSRKRG…EEDKSDNEDD (121 aa). The disordered stretch occupies residues 1–125; that stretch reads MSGRGSRKRG…SDNEDDMLLT (125 aa). The a.T hook DNA-binding region spans 6-18; sequence SRKRGRPPKTPNE. Positions 38 to 56 are enriched in polar residues; the sequence is GKSQPSTPSASRGISPQSD. Phosphoserine is present on residues Ser-40, Ser-52, Ser-55, Ser-59, and Ser-62. Residues 66–82 are compositionally biased toward basic residues; the sequence is HTNRSRGSAAKRGRGRK. Positions 109 to 125 are enriched in acidic residues; sequence GDSEEDKSDNEDDMLLT. The DDT domain occupies 188 to 248; it reads NTHVLRALSI…LKAILREEDA (61 aa). The PHD-type 1 zinc-finger motif lies at 339-386; sequence DDHCRVCHRLGDLLCCETCPAVYHLECVDPPMNDVPTEDWQCGLCRSH. A coiled-coil region spans residues 460–515; sequence RLHSQITERRDEIERQMKLTETLTNEHKHTKRSVIEIEQEAKNELLEKEVLDEDEK. Residues 505–538 form a disordered region; the sequence is LEKEVLDEDEKDGDAKSESQSIEGTKKQEECKMV. Basic and acidic residues predominate over residues 528-537; the sequence is GTKKQEECKM. A coiled-coil region spans residues 688–720; sequence LQRITSAEREERKKLEKREKRERDDEEERNRLA. Disordered stretches follow at residues 1026-1048, 1135-1159, and 1406-1425; these read EGKRESTQVAVDDSEEGKPAESE, TGLNSGNAEDVDMTPGWRRKRNQKS, and RSGLRKRKRAESPQPTEPQI. A Phosphoserine modification is found at Ser-1417. Thr-1527 is modified (phosphothreonine). A compositionally biased stretch (low complexity) spans 1559–1590; it reads SRTGGANTAAAAASPTVGGSTSTQSNPSTSTP. Disordered stretches follow at residues 1559–1596, 2181–2203, and 2283–2307; these read SRTGGANTAAAAASPTVGGSTSTQSNPSTSTPHKVQII, INNGDDQENSKCAETENSNITTN, and TNEWETCSRGSVNEEALTPSRQTDD. Residues 2283–2293 show a composition bias toward polar residues; it reads TNEWETCSRGS. A coiled-coil region spans residues 2338 to 2373; sequence KNDEVAELGEQKQSQLERHKELLKKNILRKRSLLER. The tract at residues 2382-2432 is disordered; that stretch reads DVKTKVQRHVRPLSNASPDEQSENERSGEPNLDFKRTEVQNPRHGAGRPKK. A phosphoserine mark is found at Ser-2395, Ser-2398, and Ser-2403. The span at 2404-2419 shows a compositional bias: basic and acidic residues; that stretch reads ENERSGEPNLDFKRTE. The PHD-type 2 zinc finger occupies 2481–2546; the sequence is EFICIDCKRA…EYVCPECQRK (66 aa). The region spanning 2556–2660 is the Bromo domain; that stretch reads KLTSNDVEEL…SYFVQKIKNF (105 aa).

It belongs to the BPTF family. Component of the NURF complex composed of Caf1-55, E(bx), Nurf-38 and Iswi. Interacts with Trl. Interacts with histone H3-K4Me3.

The protein resides in the nucleus. Histone-binding component of NURF (nucleosome remodeling factor), a complex which catalyzes ATP-dependent nucleosome sliding and facilitates transcription of chromatin. Specifically recognizes H3 tails trimethylated on 'Lys-4' (H3K4me3), which mark transcription start sites of virtually all active genes. Required for homeotic gene expression, proper larval blood cell development, normal male X chromosome morphology, ecdysteroid signaling and metamorphosis. This chain is Nucleosome-remodeling factor subunit NURF301 (E(bx)), found in Drosophila melanogaster (Fruit fly).